The following is a 398-amino-acid chain: Acetate kinase (398 aa).

Residue asparagine 7 coordinates Mg(2+). ATP is bound at residue lysine 14. Arginine 92 is a binding site for substrate. Catalysis depends on aspartate 149, which acts as the Proton donor/acceptor. ATP contacts are provided by residues 208-212, 283-285, and 331-335; these read HLGNG, DCR, and GIGEN. Position 385 (glutamate 385) interacts with Mg(2+).

This sequence belongs to the acetokinase family. In terms of assembly, homodimer. Mg(2+) serves as cofactor. The cofactor is Mn(2+).

It localises to the cytoplasm. The catalysed reaction is acetate + ATP = acetyl phosphate + ADP. It functions in the pathway metabolic intermediate biosynthesis; acetyl-CoA biosynthesis; acetyl-CoA from acetate: step 1/2. Catalyzes the formation of acetyl phosphate from acetate and ATP. Can also catalyze the reverse reaction. The sequence is that of Acetate kinase from Fusobacterium nucleatum subsp. nucleatum (strain ATCC 25586 / DSM 15643 / BCRC 10681 / CIP 101130 / JCM 8532 / KCTC 2640 / LMG 13131 / VPI 4355).